A 435-amino-acid chain; its full sequence is MGENHDHEQSIKRNSMIYNENERQLCNSNLKILQNKRALSKNDSSSKQQVQDSKPRRALTDVPVNNNPLSQNKRIVAGSKAAKVRREENIRPIVSAVQKRQIYNDRTAAEQEEEEEEEGEDDDAASIVNKKRRIDAEGVSEIVGWQDLDYVEKDDTAMVAEYSAEIFAFLYRRELETLPSHNYLLDKTSKYYLRPSMRTILVDWLVEVHEKFQCYPETLFLSINLMDRFLAKNKVTMNKLQLLAVTSLFIAAKFEEVNLPKLAEYAYITDGAASKNDIKNAEMFMLTSLEFNIGWPNPLNFLRRISKADDYDPVNRNIGKFILEYAYCCHQFIHLPPSTVSAMAMYIARRMTNRNKNELWNGTLQHYSGGIDPIHDEAFQSLCIDLVKDIASSKTHLDSLILKYKKPRYGSVYFQTFKWCTSEMHSNFQNLFNLK.

Disordered stretches follow at residues 36 to 70 (KRALSKNDSSSKQQVQDSKPRRALTDVPVNNNPLS) and 104 to 126 (NDRTAAEQEEEEEEEGEDDDAAS). Residues 41-52 (KNDSSSKQQVQD) are compositionally biased toward low complexity. Acidic residues predominate over residues 110–124 (EQEEEEEEEGEDDDA).

This sequence belongs to the cyclin family. Cyclin AB subfamily.

Functionally, required for efficient progression through S phase and possibly for the normal progression through meiosis. Interacts with CDC28. The protein is S-phase entry cyclin-5 (CLB5) of Saccharomyces cerevisiae (strain ATCC 204508 / S288c) (Baker's yeast).